The following is a 118-amino-acid chain: V-type proton ATPase subunit G 3 (118 aa).

Positions Met1–Leu12 are enriched in polar residues. Residues Met1–Thr44 are disordered. A coiled-coil region spans residues Ser5 to Lys53. Residues Ala14 to Lys26 show a composition bias toward basic and acidic residues.

The protein belongs to the V-ATPase G subunit family. As to quaternary structure, V-ATPase is a heteromultimeric enzyme made up of two complexes: the ATP-hydrolytic V1 complex and the proton translocation V0 complex. The V1 complex consists of three catalytic AB heterodimers that form a heterohexamer, three peripheral stalks each consisting of EG heterodimers, one central rotor including subunits D and F, and the regulatory subunits C and H. The proton translocation complex V0 consists of the proton transport subunit a, a ring of proteolipid subunits c9c'', rotary subunit d, subunits e and f, and the accessory subunits ATP6AP1/Ac45 and ATP6AP2/PRR. Kidney.

Subunit of the V1 complex of vacuolar(H+)-ATPase (V-ATPase), a multisubunit enzyme composed of a peripheral complex (V1) that hydrolyzes ATP and a membrane integral complex (V0) that translocates protons. V-ATPase is responsible for acidifying and maintaining the pH of intracellular compartments and in some cell types, is targeted to the plasma membrane, where it is responsible for acidifying the extracellular environment. The chain is V-type proton ATPase subunit G 3 (Atp6v1g3) from Mus musculus (Mouse).